Here is a 356-residue protein sequence, read N- to C-terminus: Ferrochelatase (356 aa).

2 residues coordinate Fe cation: His214 and Glu295.

This sequence belongs to the ferrochelatase family.

Its subcellular location is the cytoplasm. It carries out the reaction heme b + 2 H(+) = protoporphyrin IX + Fe(2+). It functions in the pathway porphyrin-containing compound metabolism; protoheme biosynthesis; protoheme from protoporphyrin-IX: step 1/1. Functionally, catalyzes the ferrous insertion into protoporphyrin IX. In Paraburkholderia phymatum (strain DSM 17167 / CIP 108236 / LMG 21445 / STM815) (Burkholderia phymatum), this protein is Ferrochelatase.